Reading from the N-terminus, the 102-residue chain is Large ribosomal subunit protein uL24 (102 aa).

Belongs to the universal ribosomal protein uL24 family. In terms of assembly, part of the 50S ribosomal subunit.

Functionally, one of two assembly initiator proteins, it binds directly to the 5'-end of the 23S rRNA, where it nucleates assembly of the 50S subunit. Its function is as follows. One of the proteins that surrounds the polypeptide exit tunnel on the outside of the subunit. The polypeptide is Large ribosomal subunit protein uL24 (Herpetosiphon aurantiacus (strain ATCC 23779 / DSM 785 / 114-95)).